The primary structure comprises 540 residues: Chaperonin GroEL 2 (540 aa).

ATP is bound by residues 29 to 32 (TLGP), 86 to 90 (DGTTT), glycine 413, and aspartate 492. The segment at 521-540 (KPEKEKASVPGGGDMGGMDF) is disordered. Residues 530–540 (PGGGDMGGMDF) are compositionally biased toward gly residues.

The protein belongs to the chaperonin (HSP60) family. In terms of assembly, forms a cylinder of 14 subunits composed of two heptameric rings stacked back-to-back. Interacts with the co-chaperonin GroES.

It localises to the secreted. Its subcellular location is the capsule. The protein localises to the cell surface. The protein resides in the cell wall. It catalyses the reaction ATP + H2O + a folded polypeptide = ADP + phosphate + an unfolded polypeptide.. Together with its co-chaperonin GroES, plays an essential role in assisting protein folding. The GroEL-GroES system forms a nano-cage that allows encapsulation of the non-native substrate proteins and provides a physical environment optimized to promote and accelerate protein folding. This Mycobacterium tuberculosis (strain ATCC 25177 / H37Ra) protein is Chaperonin GroEL 2.